We begin with the raw amino-acid sequence, 186 residues long: GPI-anchored hemophore ARB_02741 (186 aa).

The first 18 residues, M1–A18, serve as a signal peptide directing secretion. One can recognise a CFEM domain in the interval Q19–S108. Intrachain disulfides connect C26-C67, C30-C62, C40-C48, and C50-C83. D45 lines the heme pocket. Residues P89–P159 are disordered. A compositionally biased stretch (low complexity) spans E96–G131. Over residues S132–G144 the composition is skewed to gly residues. The span at F148–P159 shows a compositional bias: polar residues. G163 is lipidated: GPI-anchor amidated glycine. A propeptide spans A164–L186 (removed in mature form).

Belongs to the RBT5 family. In terms of processing, the GPI-anchor is attached to the protein in the endoplasmic reticulum and serves to target the protein to the cell surface. There, the glucosamine-inositol phospholipid moiety is cleaved off and the GPI-modified mannoprotein is covalently attached via its lipidless GPI glycan remnant to the 1,6-beta-glucan of the outer cell wall layer.

Its subcellular location is the secreted. The protein localises to the cell wall. It localises to the cell membrane. Functionally, GPI-anchored cell wall protein involved in stabilizing the cell wall. This is GPI-anchored hemophore ARB_02741 from Arthroderma benhamiae (strain ATCC MYA-4681 / CBS 112371) (Trichophyton mentagrophytes).